Consider the following 257-residue polypeptide: 8-demethyl-8-aminoriboflavin-5'-phosphate synthase (257 aa).

FMN-binding positions include 11 to 13 (TLR), 19 to 21 (SQT), 91 to 94 (ITLN), 132 to 136 (CGNED), and tyrosine 240.

This sequence belongs to the SsuE family. Homotetramer.

The enzyme catalyses FMN + L-glutamate + 3 A + O2 + H2O = 8-amino-8-demethylriboflavin 5'-phosphate + 2-oxoglutarate + 3 AH2 + CO2 + H(+). The protein operates within antibiotic biosynthesis. Functionally, involved in the biosynthesis of the riboflavin analog antibiotic roseoflavin (3,8-dimethylamino-riboflavin). Catalyzes the site-specific substitution of the C-8 methyl group of riboflavin-5'-phosphate (FMN) by an amino group to yield 8-amino-8-demethylriboflavin 5'-phosphate, via a combined oxidation, decarboxylation and transamination reaction. The catalysis is initiated by an oxidation step in which the C-8 methyl group on the dimethylbenzene ring of FMN is converted to a formyl group to yield the 8-demethyl-8-formylriboflavin-5'-phosphate (OHC-RP) intermediate. In the presence of thiamine, the formyl group is oxidized into a carboxyl group to yield the 8-demethyl-8-carboxyriboflavin-5'-phosphate (HO2C-RP) intermediate. Finally, in the presence of L-glutamate as an amino donor, decarboxylation and aminotransfer occur, resulting in production of 8-demethyl-8-aminoriboflavin-5'-phosphate. Addition of NAD (but not NADP) to the reaction increases the yield 1.7-fold. The reaction also proceeds without the addition of any electron acceptor, and it is possible that molecular oxygen serves this role. The protein is 8-demethyl-8-aminoriboflavin-5'-phosphate synthase of Streptomyces davaonensis (strain DSM 101723 / JCM 4913 / KCC S-0913 / 768).